Reading from the N-terminus, the 514-residue chain is HERV-H LTR-associating protein 1 homolog (514 aa).

The signal sequence occupies residues 1–29; that stretch reads MQSFLLHCPPIRLCMGLACILFLWNAVSG. 9 N-linked (GlcNAc...) asparagine glycosylation sites follow: asparagine 58, asparagine 97, asparagine 139, asparagine 161, asparagine 179, asparagine 200, asparagine 217, asparagine 232, and asparagine 321. Positions 379 to 420 are disordered; sequence LHPTGILTTPSRLAQPSRASGTLMPGTQTTNPTQAPAPRVPQ. A compositionally biased stretch (polar residues) spans 384–398; the sequence is ILTTPSRLAQPSRAS. Over residues 403 to 415 the composition is skewed to low complexity; the sequence is PGTQTTNPTQAPA.

Its subcellular location is the secreted. The polypeptide is HERV-H LTR-associating protein 1 homolog (Hhla1) (Mus musculus (Mouse)).